Here is a 327-residue protein sequence, read N- to C-terminus: MSFVAHPNIDPKSLGKVGVLLGGRSAEREISLMSGNGVLAALQSRGVDAHGFDPGLQSVAELAAAGFDRVFIALHGRYGEDGTIQGLLEQLGVPYTGSGVLASAMAMDKQATKRLWMTYGLATPRFAMLHADTDFDAVAADLGLPLIVKPAREGSSIGLTKVTAADQMRAAFEKAAALDNDVIAETFIDGAELTCPIVGEGDSAEALPVIRIVAPEANYDYQNKYFTDDTQYLCPSGLDPEVEREVRALAVQSYRVLGCRGWARADLMLRADGKPFLLEMNTSPGMTGHSLVPMAARAVGISYEDFVMQVVAAATLDLHPNEHWKPE.

An ATP-grasp domain is found at 113–312 (KRLWMTYGLA…YEDFVMQVVA (200 aa)). Residue 139–194 (AADLGLPLIVKPAREGSSIGLTKVTAADQMRAAFEKAAALDNDVIAETFIDGAELT) coordinates ATP. Residues D266, E279, and N281 each contribute to the Mg(2+) site.

This sequence belongs to the D-alanine--D-alanine ligase family. Mg(2+) serves as cofactor. Requires Mn(2+) as cofactor.

It localises to the cytoplasm. It catalyses the reaction 2 D-alanine + ATP = D-alanyl-D-alanine + ADP + phosphate + H(+). It participates in cell wall biogenesis; peptidoglycan biosynthesis. Functionally, cell wall formation. The sequence is that of D-alanine--D-alanine ligase from Cupriavidus necator (strain ATCC 17699 / DSM 428 / KCTC 22496 / NCIMB 10442 / H16 / Stanier 337) (Ralstonia eutropha).